A 316-amino-acid chain; its full sequence is Transaldolase (316 aa).

Lys-132 functions as the Schiff-base intermediate with substrate in the catalytic mechanism.

It belongs to the transaldolase family. Type 1 subfamily. Homodimer.

The protein localises to the cytoplasm. It catalyses the reaction D-sedoheptulose 7-phosphate + D-glyceraldehyde 3-phosphate = D-erythrose 4-phosphate + beta-D-fructose 6-phosphate. Its pathway is carbohydrate degradation; pentose phosphate pathway; D-glyceraldehyde 3-phosphate and beta-D-fructose 6-phosphate from D-ribose 5-phosphate and D-xylulose 5-phosphate (non-oxidative stage): step 2/3. Its function is as follows. Transaldolase is important for the balance of metabolites in the pentose-phosphate pathway. The polypeptide is Transaldolase (Vibrio vulnificus (strain CMCP6)).